Reading from the N-terminus, the 800-residue chain is MWLLLALLSIFQETPAFSLEASEEMEQEPCPAPISEQQEQVLTVALGQPVRLCCGRTERGRHWYKEGSRLASAGRVRGWRGRLEIASFLPEDAGRYLCLARGSMTVVHNLTLIMDDSLPSINNEDPKTLSSSSSGHSYLQQAPYWTHPQRMEKKLHAVPAGNTVKFRCPAAGNPMPTIHWLKNGQAFHGENRIGGIRLRHQHWSLVMESVVPSDRGTYTCLVENSLGSIRYSYLLDVLERSPHRPILQAGLPANTTAVVGSNVELLCKVYSDAQPHIQWLKHIVINGSSFGADGFPYVQVLKTTDINSSEVEVLYLRNVSAEDAGEYTCLAGNSIGLSYQSAWLTVLPAEEEDLAWTTATSEARYTDIILYVSGSLALVLLLLLAGVYHRQAIHGHHSRQPVTVQKLSRFPLARQFSLESRSSGKSSLSLVRGVRLSSSGPPLLTGLVSLDLPLDPLWEFPRDRLVLGKPLGEGCFGQVVRAEALGMDSSRPDQTSTVAVKMLKDNASDKDLADLISEMEMMKLIGRHKNIINLLGVCTQEGPLYVIVEYAAKGNLREFLRARRPPGPDLSPDGPRSSEGPLSFPALVSCAYQVARGMQYLESRKCIHRDLAARNVLVTEDDVMKIADFGLARGVHHIDYYKKTSNGRLPVKWMAPEALFDRVYTHQSDVWSFGILLWEIFTLGGSPYPGIPVEELFSLLREGHRMERPPNCPSELYGLMRECWHAAPSQRPTFKQLVEALDKVLLAVSEEYLDLRLTFGPYSPNNGDASSTCSSSDSVFSHDPLPLEPSPFPFPEAQTT.

Residues M1 to A16 form the signal peptide. 3 consecutive Ig-like C2-type domains span residues F17–D115, P148–D236, and P245–T345. Over F17–D367 the chain is Extracellular. C54 and C98 are joined by a disulfide. N109 carries N-linked (GlcNAc...) asparagine glycosylation. The cysteines at positions 168 and 220 are disulfide-linked. N254, N286, and N307 each carry an N-linked (GlcNAc...) asparagine glycan. Residues C267 and C329 are joined by a disulfide bond. A helical membrane pass occupies residues I368–Y388. Over H389–T800 the chain is Cytoplasmic. Positions L465 to L753 constitute a Protein kinase domain. ATP is bound by residues L471 to V479 and K501. A Phosphoserine modification is found at S571. Catalysis depends on D610, which acts as the Proton acceptor. A phosphotyrosine; by autocatalysis mark is found at Y640, Y641, and Y752. Residues D768–T800 are disordered. Positions S770–S781 are enriched in low complexity.

It belongs to the protein kinase superfamily. Tyr protein kinase family. Fibroblast growth factor receptor subfamily. As to quaternary structure, monomer. Homodimer after ligand binding. Interacts with FGF1, FGF2, FGF4, FGF6, FGF8, FGF9, FGF16, FGF17, FGF18, FGF19, FGF21 and FGF23 (in vitro). Binding affinity for FGF family members is enhanced by interactions between FGFs and heparan sulfate proteoglycans. Interacts with KLB; this strongly increases the affinity for FGF19 and FGF23. Affinity for FGF19 is strongly increased by KLB and sulfated glycosaminoglycans. KLB and KL both interact with the core-glycosylated FGFR4 in the endoplasmic reticulum and promote its degradation, so that only FGFR4 with fully mature N-glycans is expressed at the cell surface. Identified in a complex with NCAM1, CDH2, PLCG1, FRS2, SRC, SHC1, GAP43 and CTTN. Interacts with MMP14 and HIP1. Interacts with STAT3. Post-translationally, N-glycosylated. Full maturation of the glycan chains in the Golgi is essential for high affinity interaction with FGF19. Ubiquitinated. Subject to proteasomal degradation when not fully glycosylated. In terms of processing, autophosphorylated. Binding of FGF family members together with heparan sulfate proteoglycan or heparin promotes receptor dimerization and autophosphorylation on tyrosine residues. Autophosphorylation occurs in trans between the two FGFR molecules present in the dimer.

The protein resides in the cell membrane. Its subcellular location is the endosome. The protein localises to the endoplasmic reticulum. It carries out the reaction L-tyrosyl-[protein] + ATP = O-phospho-L-tyrosyl-[protein] + ADP + H(+). Its activity is regulated as follows. Present in an inactive conformation in the absence of bound ligand. Ligand binding leads to dimerization and activation by autophosphorylation on tyrosine residues. Tyrosine-protein kinase that acts as a cell-surface receptor for fibroblast growth factors and plays a role in the regulation of cell proliferation, differentiation and migration, and in regulation of lipid metabolism, bile acid biosynthesis, glucose uptake, vitamin D metabolism and phosphate homeostasis. Required for normal down-regulation of the expression of CYP7A1, the rate-limiting enzyme in bile acid synthesis, in response to FGF19. Phosphorylates PLCG1 and FRS2. Ligand binding leads to the activation of several signaling cascades. Activation of PLCG1 leads to the production of the cellular signaling molecules diacylglycerol and inositol 1,4,5-trisphosphate. Phosphorylation of FRS2 triggers recruitment of GRB2, GAB1, PIK3R1 and SOS1, and mediates activation of RAS, MAPK1/ERK2, MAPK3/ERK1 and the MAP kinase signaling pathway, as well as of the AKT1 signaling pathway. Promotes SRC-dependent phosphorylation of the matrix protease MMP14 and its lysosomal degradation. FGFR4 signaling is down-regulated by receptor internalization and degradation; MMP14 promotes internalization and degradation of FGFR4. This chain is Fibroblast growth factor receptor 4 (Fgfr4), found in Rattus norvegicus (Rat).